The chain runs to 305 residues: ATP-dependent Clp protease proteolytic subunit-related protein 4, chloroplastic (305 aa).

The N-terminal 68 residues, 1 to 68, are a transit peptide targeting the chloroplast; it reads MEVAAATATS…SSDLCGAKLR (68 aa).

The protein belongs to the peptidase S14 family. Component of the chloroplastic Clp protease core complex which consist of at least 16 proteins: CLPP4 (3 copies), CLPP5 (3 copies), CLPR4 (2 copies), ClpP1 (1 copy), CLPP6 (1 copy), CLPR2 (1 copy), CLPT1 (1 copy), CLPT2 (1 copy) and 3 copies of CLPP3 and/or CLPR1 and/or CLPR3. The core complex is organized in two heptameric rings, one containing CLPP3,4,5,6 in a 1:2:3:1 ratio and the other CLPP1 and CLPR1,2,3,4 in a 3:1:1:1:1 ratio.

The protein resides in the plastid. It is found in the chloroplast. Functionally, involved in plastid protein homeostasis. The sequence is that of ATP-dependent Clp protease proteolytic subunit-related protein 4, chloroplastic from Arabidopsis thaliana (Mouse-ear cress).